Reading from the N-terminus, the 232-residue chain is Orotidine 5'-phosphate decarboxylase (232 aa).

Substrate is bound by residues Asp16, Lys38, 65–74 (DLKLHDIGNT), Thr119, Arg180, Gln189, Gly209, and Arg210. Residue Lys67 is the Proton donor of the active site.

The protein belongs to the OMP decarboxylase family. Type 1 subfamily. Homodimer.

The enzyme catalyses orotidine 5'-phosphate + H(+) = UMP + CO2. It functions in the pathway pyrimidine metabolism; UMP biosynthesis via de novo pathway; UMP from orotate: step 2/2. Functionally, catalyzes the decarboxylation of orotidine 5'-monophosphate (OMP) to uridine 5'-monophosphate (UMP). This is Orotidine 5'-phosphate decarboxylase from Methylorubrum populi (strain ATCC BAA-705 / NCIMB 13946 / BJ001) (Methylobacterium populi).